The primary structure comprises 272 residues: Rhomboid-type serine protease B (272 aa).

The next 6 helical transmembrane spans lie at 30-50 (LVLL…WSVV), 72-92 (PFIH…TPLL), 103-123 (TAVA…YILV), 133-153 (AVVG…IKTF), 164-184 (TKIP…IFVP), and 186-206 (TSFL…LGYL). Catalysis depends on serine 138, which acts as the Nucleophile. Histidine 191 is a catalytic residue.

The protein belongs to the peptidase S54 family.

It localises to the membrane. It carries out the reaction Cleaves type-1 transmembrane domains using a catalytic dyad composed of serine and histidine that are contributed by different transmembrane domains.. In terms of biological role, rhomboid protease that catalyzes intramembrane proteolysis. Required for transcription factor srbA activation by mediating its release from the membrane and thereby regulating its activity under hypoxic conditions. Essential for iron homeostasis and resistance to azoles such as voriconazole. Required for virulence in murine models of invasive pulmonary aspergillosis (IPA). The chain is Rhomboid-type serine protease B from Aspergillus fumigatus (strain ATCC MYA-4609 / CBS 101355 / FGSC A1100 / Af293) (Neosartorya fumigata).